The primary structure comprises 365 residues: 2-aminoethylphosphonate--pyruvate transaminase (365 aa).

Lysine 194 bears the N6-(pyridoxal phosphate)lysine mark.

This sequence belongs to the class-V pyridoxal-phosphate-dependent aminotransferase family. PhnW subfamily. In terms of assembly, homodimer. The cofactor is pyridoxal 5'-phosphate.

It catalyses the reaction (2-aminoethyl)phosphonate + pyruvate = phosphonoacetaldehyde + L-alanine. Involved in phosphonate degradation. This Bacillus cereus (strain Q1) protein is 2-aminoethylphosphonate--pyruvate transaminase.